The primary structure comprises 284 residues: Esterase alnB (284 aa).

Active-site charge relay system residues include serine 93, aspartate 226, and histidine 255.

It belongs to the LovG family.

Its pathway is polyketide biosynthesis. Esterase; part of the gene cluster that mediates the biosynthesis of asperlin, a polyketide showing anti-inflammatory, antitumor and antibiotic activities. The first step of the asperlin biosynthesis is the production of the intermediate 2,4,6-octatrienoic acid by the highly redusing polyketide synthase alnA with cleavage of the PKS product by the esterase alnB. 2,4,6-octatrienoic acid is further converted to asperlin via several steps involving the remaining enzymes from the cluster. The chain is Esterase alnB from Emericella nidulans (strain FGSC A4 / ATCC 38163 / CBS 112.46 / NRRL 194 / M139) (Aspergillus nidulans).